The chain runs to 375 residues: Probable Na(+)/H(+) antiporter GerT (375 aa).

10 helical membrane-spanning segments follow: residues 27-47 (PSVL…LGII), 89-109 (AGGI…FGLI), 112-132 (HAIF…VQTL), 145-165 (TILG…AFVM), 183-203 (IIFF…IMKM), 204-224 (LVPL…CFSF), 226-246 (YYSE…GIAI), 261-281 (PIAY…EITF), 288-308 (LWFI…GSGL), and 350-370 (ENFT…PPLL).

The protein belongs to the monovalent cation:proton antiporter 2 (CPA2) transporter (TC 2.A.37) family.

It localises to the membrane. In terms of biological role, contributes to the success of spore outgrowth from the germinated state during alkaline or Na(+) stress. Does not have a significant role in germination. This Bacillus cereus protein is Probable Na(+)/H(+) antiporter GerT (gerT).